Reading from the N-terminus, the 130-residue chain is Large ribosomal subunit protein eL32 (130 aa).

This sequence belongs to the eukaryotic ribosomal protein eL32 family.

The chain is Large ribosomal subunit protein eL32 (rpl32e) from Pyrococcus horikoshii (strain ATCC 700860 / DSM 12428 / JCM 9974 / NBRC 100139 / OT-3).